The chain runs to 232 residues: Phosphate import ATP-binding protein PstB (232 aa).

The ABC transporter domain maps to 1 to 227 (MFNINMEIKE…PKDRRTENYI (227 aa)). An ATP-binding site is contributed by 18-25 (GPSGCGKT).

It belongs to the ABC transporter superfamily. Phosphate importer (TC 3.A.1.7) family. The complex is composed of two ATP-binding proteins (PstB), two transmembrane proteins (PstC and PstA) and a solute-binding protein (PstS).

It localises to the cell membrane. It carries out the reaction phosphate(out) + ATP + H2O = ADP + 2 phosphate(in) + H(+). In terms of biological role, part of the ABC transporter complex PstSACB involved in phosphate import. Responsible for energy coupling to the transport system. The polypeptide is Phosphate import ATP-binding protein PstB (Mycoplasma mycoides subsp. mycoides SC (strain CCUG 32753 / NCTC 10114 / PG1)).